Here is a 465-residue protein sequence, read N- to C-terminus: Cysteine--tRNA ligase (465 aa).

Residue Cys-28 coordinates Zn(2+). Residues 30–40 (MTVYDYCHLGH) carry the 'HIGH' region motif. Zn(2+) is bound by residues Cys-209, His-234, and Glu-238. The 'KMSKS' region signature appears at 266 to 270 (KMSKS). An ATP-binding site is contributed by Lys-269.

It belongs to the class-I aminoacyl-tRNA synthetase family. In terms of assembly, monomer. Requires Zn(2+) as cofactor.

The protein localises to the cytoplasm. The catalysed reaction is tRNA(Cys) + L-cysteine + ATP = L-cysteinyl-tRNA(Cys) + AMP + diphosphate. The sequence is that of Cysteine--tRNA ligase from Methylococcus capsulatus (strain ATCC 33009 / NCIMB 11132 / Bath).